Here is a 354-residue protein sequence, read N- to C-terminus: Uroporphyrinogen decarboxylase (354 aa).

Residues 27–31 (RQAGR), Asp-77, Tyr-154, Ser-209, and His-327 contribute to the substrate site.

It belongs to the uroporphyrinogen decarboxylase family. In terms of assembly, homodimer.

The protein localises to the cytoplasm. The catalysed reaction is uroporphyrinogen III + 4 H(+) = coproporphyrinogen III + 4 CO2. It functions in the pathway porphyrin-containing compound metabolism; protoporphyrin-IX biosynthesis; coproporphyrinogen-III from 5-aminolevulinate: step 4/4. Its function is as follows. Catalyzes the decarboxylation of four acetate groups of uroporphyrinogen-III to yield coproporphyrinogen-III. The polypeptide is Uroporphyrinogen decarboxylase (Shewanella sp. (strain ANA-3)).